We begin with the raw amino-acid sequence, 948 residues long: Protocadherin alpha-2 (948 aa).

The N-terminal stretch at 1-22 (MASSIRRGRGAWTRLLSLLLLA) is a signal peptide. Over 23–697 (AWEVGSGQLR…GSEATLVDVN (675 aa)) the chain is Extracellular. Cadherin domains are found at residues 30–133 (QLRY…PPIF), 157–242 (ASDA…EPTF), 243–350 (AQSV…TPEV), 351–455 (SITS…APAF), 456–565 (AQPE…APAL), and 588–678 (GHVV…APKA). 4 N-linked (GlcNAc...) asparagine glycosylation sites follow: N257, N265, N362, and N548. The helical transmembrane segment at 698–718 (VYLIIAICAVSSLLVLTVLLY) threads the bilayer. The Cytoplasmic segment spans residues 719–948 (TALRCSVPPT…GNSTTDNSDQ (230 aa)). The PXXP 1 repeat unit spans residues 734 to 737 (PGKP). A 5 X 4 AA repeats of P-X-X-P region spans residues 734 to 892 (PGKPTLVCSS…PDKFIIPGSP (159 aa)). Disordered stretches follow at residues 754–801 (RRQR…RQPN), 829–854 (GPGG…EVSP), and 868–948 (KYGP…NSDQ). Residues 783 to 795 (AEEKQLSESEYVG) are compositionally biased toward basic and acidic residues. PXXP repeat units follow at residues 797–800 (PRQP), 830–833 (PGGP), 871–874 (PGNP), and 889–892 (PGSP). Over residues 907 to 921 (DKSDFITFGKKEETK) the composition is skewed to basic and acidic residues.

The protein localises to the cell membrane. In terms of biological role, potential calcium-dependent cell-adhesion protein. May be involved in the establishment and maintenance of specific neuronal connections in the brain. This Homo sapiens (Human) protein is Protocadherin alpha-2 (PCDHA2).